The sequence spans 586 residues: Arginine--tRNA ligase (586 aa).

The 'HIGH' region signature appears at 131–141 (ANPTGPMHVGH).

The protein belongs to the class-I aminoacyl-tRNA synthetase family. In terms of assembly, monomer.

The protein resides in the cytoplasm. The enzyme catalyses tRNA(Arg) + L-arginine + ATP = L-arginyl-tRNA(Arg) + AMP + diphosphate. The protein is Arginine--tRNA ligase of Xanthobacter autotrophicus (strain ATCC BAA-1158 / Py2).